Here is a 528-residue protein sequence, read N- to C-terminus: Protein HPH2 (528 aa).

The segment covering 1 to 13 (MQNAQIKSSSKGS) has biased composition (low complexity). Disordered stretches follow at residues 1–52 (MQNA…STVE), 170–193 (AQQHPAHRHYKDNDKYGLKSPSRS), 230–257 (ILPNVISKPSKRPTHHSHSSDGSSSTQT), and 270–334 (ESSP…QSVA). The span at 17–36 (GTDRNSKDGVEKRPLEDVKQ) shows a compositional bias: basic and acidic residues. Low complexity-rich tracts occupy residues 283–296 (PSVASESSPAVANP) and 308–332 (SFSQSSSSSLSSSSSSSSSTSFSQS). Residues 505–521 (ALDIVFLIIIIVICYTF) form a helical membrane-spanning segment.

As to quaternary structure, interacts with HPH1/FRT1. Phosphorylated by CDC28.

Its subcellular location is the endoplasmic reticulum membrane. Required for growth under high NaCl, alkaline pH and cell wall stress. This is Protein HPH2 (FRT2) from Saccharomyces cerevisiae (strain ATCC 204508 / S288c) (Baker's yeast).